Here is a 419-residue protein sequence, read N- to C-terminus: D-mannonate dehydratase (419 aa).

2 residues coordinate substrate: asparagine 54 and histidine 139. Tyrosine 176 (proton donor/acceptor) is an active-site residue. Residue aspartate 227 participates in Mg(2+) binding. The active-site Proton donor/acceptor is histidine 229. Mg(2+) is bound by residues glutamate 253 and glutamate 279. The substrate site is built by glutamate 279, arginine 300, histidine 329, aspartate 333, and glutamate 356.

This sequence belongs to the mandelate racemase/muconate lactonizing enzyme family. GalD subfamily. It depends on Mg(2+) as a cofactor.

It carries out the reaction D-mannonate = 2-dehydro-3-deoxy-D-gluconate + H2O. It functions in the pathway carbohydrate metabolism; pentose and glucuronate interconversion. Functionally, catalyzes the dehydration of D-mannonate. Has no detectable activity with a panel of 70 other acid sugars (in vitro). This is D-mannonate dehydratase from Xanthomonas oryzae pv. oryzicola (strain BLS256).